A 145-amino-acid chain; its full sequence is Deoxyuridine 5'-triphosphate nucleotidohydrolase (145 aa).

Substrate-binding positions include 62 to 64 (RSG), N75, 79 to 81 (TVD), and K89.

It belongs to the dUTPase family. The cofactor is Mg(2+).

It carries out the reaction dUTP + H2O = dUMP + diphosphate + H(+). It participates in pyrimidine metabolism; dUMP biosynthesis; dUMP from dCTP (dUTP route): step 2/2. Functionally, this enzyme is involved in nucleotide metabolism: it produces dUMP, the immediate precursor of thymidine nucleotides and it decreases the intracellular concentration of dUTP so that uracil cannot be incorporated into DNA. The sequence is that of Deoxyuridine 5'-triphosphate nucleotidohydrolase from Helicobacter pylori (strain ATCC 700392 / 26695) (Campylobacter pylori).